A 216-amino-acid chain; its full sequence is Uracil phosphoribosyltransferase (216 aa).

5-phospho-alpha-D-ribose 1-diphosphate is bound by residues arginine 84, arginine 109, and aspartate 137–threonine 145. Uracil is bound by residues isoleucine 202 and glycine 207–alanine 209. Aspartate 208 provides a ligand contact to 5-phospho-alpha-D-ribose 1-diphosphate.

This sequence belongs to the UPRTase family. Mg(2+) serves as cofactor.

It carries out the reaction UMP + diphosphate = 5-phospho-alpha-D-ribose 1-diphosphate + uracil. Its pathway is pyrimidine metabolism; UMP biosynthesis via salvage pathway; UMP from uracil: step 1/1. With respect to regulation, allosterically activated by GTP. In terms of biological role, catalyzes the conversion of uracil and 5-phospho-alpha-D-ribose 1-diphosphate (PRPP) to UMP and diphosphate. This chain is Uracil phosphoribosyltransferase, found in Synechocystis sp. (strain ATCC 27184 / PCC 6803 / Kazusa).